The following is a 37-amino-acid chain: Cytochrome b6-f complex subunit 5 (37 aa).

A helical membrane pass occupies residues 5 to 25 (LLDGLVLGLVFATLGGLFYAA).

Belongs to the PetG family. As to quaternary structure, the 4 large subunits of the cytochrome b6-f complex are cytochrome b6, subunit IV (17 kDa polypeptide, PetD), cytochrome f and the Rieske protein, while the 4 small subunits are PetG, PetL, PetM and PetN. The complex functions as a dimer.

The protein localises to the cellular thylakoid membrane. In terms of biological role, component of the cytochrome b6-f complex, which mediates electron transfer between photosystem II (PSII) and photosystem I (PSI), cyclic electron flow around PSI, and state transitions. PetG is required for either the stability or assembly of the cytochrome b6-f complex. In Mastigocladus laminosus (Fischerella sp.), this protein is Cytochrome b6-f complex subunit 5.